A 299-amino-acid polypeptide reads, in one-letter code: Recombination-associated protein RdgC (299 aa).

It belongs to the RdgC family.

The protein localises to the cytoplasm. The protein resides in the nucleoid. In terms of biological role, may be involved in recombination. The sequence is that of Recombination-associated protein RdgC from Cupriavidus necator (strain ATCC 17699 / DSM 428 / KCTC 22496 / NCIMB 10442 / H16 / Stanier 337) (Ralstonia eutropha).